The following is a 375-amino-acid chain: Dual specificity protein phosphatase 4 (375 aa).

The Rhodanese domain maps to 25 to 143 (SGGRCLLLDC…FASEYPEFCA (119 aa)). The Tyrosine-protein phosphatase domain occupies 176-317 (GPVEILPFLY…LLQFESQVLA (142 aa)). Cys261 (phosphocysteine intermediate) is an active-site residue.

The protein belongs to the protein-tyrosine phosphatase family. Non-receptor class dual specificity subfamily.

It localises to the nucleus. It carries out the reaction O-phospho-L-tyrosyl-[protein] + H2O = L-tyrosyl-[protein] + phosphate. The catalysed reaction is O-phospho-L-seryl-[protein] + H2O = L-seryl-[protein] + phosphate. The enzyme catalyses O-phospho-L-threonyl-[protein] + H2O = L-threonyl-[protein] + phosphate. In terms of biological role, regulates mitogenic signal transduction by dephosphorylating both Thr and Tyr residues on MAP kinases ERK1 and ERK2. The sequence is that of Dual specificity protein phosphatase 4 (DUSP4) from Gallus gallus (Chicken).